The sequence spans 146 residues: 3-hydroxyacyl-[acyl-carrier-protein] dehydratase FabZ (146 aa).

The active site involves His-49.

The protein belongs to the thioester dehydratase family. FabZ subfamily.

The protein resides in the cytoplasm. It carries out the reaction a (3R)-hydroxyacyl-[ACP] = a (2E)-enoyl-[ACP] + H2O. Functionally, involved in unsaturated fatty acids biosynthesis. Catalyzes the dehydration of short chain beta-hydroxyacyl-ACPs and long chain saturated and unsaturated beta-hydroxyacyl-ACPs. This chain is 3-hydroxyacyl-[acyl-carrier-protein] dehydratase FabZ, found in Pseudomonas fluorescens (strain ATCC BAA-477 / NRRL B-23932 / Pf-5).